The primary structure comprises 133 residues: UPF0102 protein AB57_1130 (133 aa).

Belongs to the UPF0102 family.

This is UPF0102 protein AB57_1130 from Acinetobacter baumannii (strain AB0057).